We begin with the raw amino-acid sequence, 771 residues long: Rho GTPase-activating protein 26 (771 aa).

Residues 7–262 form the BAR domain; the sequence is EFSDCYLDSP…MKENPHEHLA (256 aa). The 105-residue stretch at 265 to 369 folds into the PH domain; the sequence is PFTMEGYLYV…WMEAMDGREP (105 aa). The region spanning 383 to 568 is the Rho-GAP domain; sequence AQLDNIGFSI…IIIENYEEMF (186 aa). The interval 575–712 is disordered; that stretch reads PQTNSQLHLS…SSTSSDSSPV (138 aa). Residues 608-617 show a composition bias toward basic and acidic residues; the sequence is HSSEKEEKRN. The span at 618–637 shows a compositional bias: low complexity; it reads SVNSSAESVSSSNANSSVNS. Polar residues-rich tracts occupy residues 638 to 650 and 662 to 671; these read TCTQ…NLNA and RPNSLLNPKN. 2 stretches are compositionally biased toward low complexity: residues 673 to 683 and 691 to 712; these read SGLLPSSLNPS and PMVS…SSPV. Residues 713–771 enclose the SH3 domain; it reads SVPRKAKALYACKAEHDSELSFSAGTVFENVCPSQEPGWLEGTLNGKTGLIPENYVEFL.

It is found in the cell junction. The protein localises to the focal adhesion. Its subcellular location is the cytoplasm. The protein resides in the cytoskeleton. It localises to the endosome membrane. Its function is as follows. GTPase-activating protein for rhoa and cdc42. May be involved in the regulation of neosynthesized protein export through a Rab-endososomal dependent export route. The chain is Rho GTPase-activating protein 26 (arhgap26) from Xenopus laevis (African clawed frog).